The chain runs to 77 residues: EMBRYO SURROUNDING FACTOR 1-like protein 9 (77 aa).

The N-terminal stretch at 1 to 22 is a signal peptide; it reads MSSSRFLILCIILISFFPLHEC. Intrachain disulfides connect cysteine 38/cysteine 54, cysteine 43/cysteine 75, cysteine 52/cysteine 71, and cysteine 55/cysteine 64.

This sequence belongs to the MEG family. As to expression, expressed in flowers.

This is EMBRYO SURROUNDING FACTOR 1-like protein 9 (ESFL9) from Arabidopsis thaliana (Mouse-ear cress).